The sequence spans 360 residues: Phospho-N-acetylmuramoyl-pentapeptide-transferase (360 aa).

10 helical membrane passes run Thr-25–Asp-45, Thr-71–Ala-91, Leu-94–Tyr-114, Ser-129–Leu-148, Thr-168–Gly-188, Gly-199–Ala-219, Leu-239–Pro-259, Ile-263–Ala-283, Phe-288–Val-308, and Gln-337–Leu-357.

It belongs to the glycosyltransferase 4 family. MraY subfamily. It depends on Mg(2+) as a cofactor.

Its subcellular location is the cell inner membrane. The enzyme catalyses UDP-N-acetyl-alpha-D-muramoyl-L-alanyl-gamma-D-glutamyl-meso-2,6-diaminopimeloyl-D-alanyl-D-alanine + di-trans,octa-cis-undecaprenyl phosphate = di-trans,octa-cis-undecaprenyl diphospho-N-acetyl-alpha-D-muramoyl-L-alanyl-D-glutamyl-meso-2,6-diaminopimeloyl-D-alanyl-D-alanine + UMP. It functions in the pathway cell wall biogenesis; peptidoglycan biosynthesis. Its function is as follows. Catalyzes the initial step of the lipid cycle reactions in the biosynthesis of the cell wall peptidoglycan: transfers peptidoglycan precursor phospho-MurNAc-pentapeptide from UDP-MurNAc-pentapeptide onto the lipid carrier undecaprenyl phosphate, yielding undecaprenyl-pyrophosphoryl-MurNAc-pentapeptide, known as lipid I. In Rhodopseudomonas palustris (strain BisA53), this protein is Phospho-N-acetylmuramoyl-pentapeptide-transferase.